We begin with the raw amino-acid sequence, 723 residues long: Polyribonucleotide nucleotidyltransferase (723 aa).

Mg(2+) contacts are provided by D488 and D494. The KH domain occupies P555–I614. In terms of domain architecture, S1 motif spans G624–K692. A disordered region spans residues S701–Q723. The segment covering A707–Q723 has biased composition (low complexity).

The protein belongs to the polyribonucleotide nucleotidyltransferase family. The cofactor is Mg(2+).

The protein localises to the cytoplasm. It catalyses the reaction RNA(n+1) + phosphate = RNA(n) + a ribonucleoside 5'-diphosphate. In terms of biological role, involved in mRNA degradation. Catalyzes the phosphorolysis of single-stranded polyribonucleotides processively in the 3'- to 5'-direction. The protein is Polyribonucleotide nucleotidyltransferase of Cupriavidus necator (strain ATCC 17699 / DSM 428 / KCTC 22496 / NCIMB 10442 / H16 / Stanier 337) (Ralstonia eutropha).